The primary structure comprises 37 residues: Large ribosomal subunit protein bL36A (37 aa).

This sequence belongs to the bacterial ribosomal protein bL36 family.

The protein is Large ribosomal subunit protein bL36A of Kocuria rhizophila (strain ATCC 9341 / DSM 348 / NBRC 103217 / DC2201).